The following is a 332-amino-acid chain: 2,3-diketo-L-gulonate reductase (332 aa).

Histidine 44 serves as the catalytic Proton donor. Residues 168–174 (ITMVDMS), 224–225 (WK), and 304–306 (GHE) each bind NAD(+).

Belongs to the LDH2/MDH2 oxidoreductase family. DlgD subfamily. Homodimer.

It localises to the cytoplasm. It carries out the reaction 3-dehydro-L-gulonate + NAD(+) = 2,3-dioxo-L-gulonate + NADH + H(+). The catalysed reaction is 3-dehydro-L-gulonate + NADP(+) = 2,3-dioxo-L-gulonate + NADPH + H(+). In terms of biological role, catalyzes the reduction of 2,3-diketo-L-gulonate in the presence of NADH, to form 3-keto-L-gulonate. The chain is 2,3-diketo-L-gulonate reductase from Salmonella paratyphi A (strain ATCC 9150 / SARB42).